The sequence spans 156 residues: Small ribosomal subunit protein uS7 (156 aa).

Belongs to the universal ribosomal protein uS7 family. As to quaternary structure, part of the 30S ribosomal subunit. Contacts proteins S9 and S11.

One of the primary rRNA binding proteins, it binds directly to 16S rRNA where it nucleates assembly of the head domain of the 30S subunit. Is located at the subunit interface close to the decoding center, probably blocks exit of the E-site tRNA. In Dehalococcoides mccartyi (strain ATCC BAA-2266 / KCTC 15142 / 195) (Dehalococcoides ethenogenes (strain 195)), this protein is Small ribosomal subunit protein uS7.